Reading from the N-terminus, the 446-residue chain is Corrinoid/iron-sulfur protein large subunit (446 aa).

The 4Fe-4S domain occupies 2–59 (PLTGLEIYKQLPKKNCGECGTPTCLAFAMNLASGKASLDSCPYVSDAAREALDAAAAP). 4 residues coordinate [4Fe-4S] cluster: Cys-17, Cys-20, Cys-25, and Cys-42. 5-methoxybenzimidazolylcob(I)amide is bound by residues Thr-340, Thr-346, 370 to 373 (GLSV), and Ala-433.

In terms of assembly, heterohexamer composed of 2 subunits of AcsC, 2 subunits of AcsD and 2 subunits of AcsE. Requires [4Fe-4S] cluster as cofactor.

In terms of biological role, acts as a methyl group carrier in the anaerobic acetyl-CoA pathway (Wood-Ljungdahl pathway) of carbon monoxide and carbon dioxide fixation. Binds the corrinoid 5-methoxybenzimidazolylcobamide which is then methylated by the AcsE subunit. The polypeptide is Corrinoid/iron-sulfur protein large subunit (acsC) (Moorella thermoacetica (Clostridium thermoaceticum)).